A 314-amino-acid polypeptide reads, in one-letter code: Ribosomal protein uL3 glutamine methyltransferase (314 aa).

Belongs to the protein N5-glutamine methyltransferase family. PrmB subfamily.

The enzyme catalyses L-glutaminyl-[ribosomal protein uL3] + S-adenosyl-L-methionine = N(5)-methyl-L-glutaminyl-[ribosomal protein uL3] + S-adenosyl-L-homocysteine + H(+). In terms of biological role, methylates large ribosomal subunit protein uL3 on a specific glutamine residue. In Haemophilus influenzae (strain ATCC 51907 / DSM 11121 / KW20 / Rd), this protein is Ribosomal protein uL3 glutamine methyltransferase.